The chain runs to 564 residues: Pyruvate decarboxylase (564 aa).

Pyruvate-binding residues include aspartate 28 and histidine 115. Thiamine diphosphate is bound by residues threonine 390 and 413-415 (GSI). Aspartate 444 contacts Mg(2+). Residues 445-446 (GS) and 471-476 (NDGYTI) each bind thiamine diphosphate. Asparagine 471 and glycine 473 together coordinate Mg(2+). Glutamate 477 provides a ligand contact to pyruvate.

Belongs to the TPP enzyme family. As to quaternary structure, homotetramer. Mg(2+) serves as cofactor. Requires thiamine diphosphate as cofactor.

It catalyses the reaction a 2-oxocarboxylate + H(+) = an aldehyde + CO2. The enzyme catalyses pyruvate + H(+) = acetaldehyde + CO2. The sequence is that of Pyruvate decarboxylase (PDC1) from Candida glabrata (strain ATCC 2001 / BCRC 20586 / JCM 3761 / NBRC 0622 / NRRL Y-65 / CBS 138) (Yeast).